Consider the following 117-residue polypeptide: UPF0342 protein LEUM_1212 (117 aa).

It belongs to the UPF0342 family.

The chain is UPF0342 protein LEUM_1212 from Leuconostoc mesenteroides subsp. mesenteroides (strain ATCC 8293 / DSM 20343 / BCRC 11652 / CCM 1803 / JCM 6124 / NCDO 523 / NBRC 100496 / NCIMB 8023 / NCTC 12954 / NRRL B-1118 / 37Y).